Reading from the N-terminus, the 330-residue chain is Ketol-acid reductoisomerase (NADP(+)) (330 aa).

In terms of domain architecture, KARI N-terminal Rossmann spans 3-184 (LPVYYDKDID…GGGRMGVLET (182 aa)). NADP(+) contacts are provided by residues 26-29 (YGVQ), Ser52, and Ser54. His109 is an active-site residue. Gly135 serves as a coordination point for NADP(+). The KARI C-terminal knotted domain maps to 185–329 (SFKEECESDL…EILRAPFNHK (145 aa)). Positions 193, 197, 229, and 233 each coordinate Mg(2+). Residue Ser254 participates in substrate binding.

Belongs to the ketol-acid reductoisomerase family. It depends on Mg(2+) as a cofactor.

The enzyme catalyses (2R)-2,3-dihydroxy-3-methylbutanoate + NADP(+) = (2S)-2-acetolactate + NADPH + H(+). It catalyses the reaction (2R,3R)-2,3-dihydroxy-3-methylpentanoate + NADP(+) = (S)-2-ethyl-2-hydroxy-3-oxobutanoate + NADPH + H(+). It participates in amino-acid biosynthesis; L-isoleucine biosynthesis; L-isoleucine from 2-oxobutanoate: step 2/4. The protein operates within amino-acid biosynthesis; L-valine biosynthesis; L-valine from pyruvate: step 2/4. Its function is as follows. Involved in the biosynthesis of branched-chain amino acids (BCAA). Catalyzes an alkyl-migration followed by a ketol-acid reduction of (S)-2-acetolactate (S2AL) to yield (R)-2,3-dihydroxy-isovalerate. In the isomerase reaction, S2AL is rearranged via a Mg-dependent methyl migration to produce 3-hydroxy-3-methyl-2-ketobutyrate (HMKB). In the reductase reaction, this 2-ketoacid undergoes a metal-dependent reduction by NADPH to yield (R)-2,3-dihydroxy-isovalerate. The chain is Ketol-acid reductoisomerase (NADP(+)) from Helicobacter pylori (strain J99 / ATCC 700824) (Campylobacter pylori J99).